We begin with the raw amino-acid sequence, 198 residues long: ATP-dependent Clp protease proteolytic subunit (198 aa).

Serine 102 (nucleophile) is an active-site residue. Histidine 127 is an active-site residue.

This sequence belongs to the peptidase S14 family. As to quaternary structure, fourteen ClpP subunits assemble into 2 heptameric rings which stack back to back to give a disk-like structure with a central cavity, resembling the structure of eukaryotic proteasomes.

The protein localises to the cytoplasm. It carries out the reaction Hydrolysis of proteins to small peptides in the presence of ATP and magnesium. alpha-casein is the usual test substrate. In the absence of ATP, only oligopeptides shorter than five residues are hydrolyzed (such as succinyl-Leu-Tyr-|-NHMec, and Leu-Tyr-Leu-|-Tyr-Trp, in which cleavage of the -Tyr-|-Leu- and -Tyr-|-Trp bonds also occurs).. In terms of biological role, cleaves peptides in various proteins in a process that requires ATP hydrolysis. Has a chymotrypsin-like activity. Plays a major role in the degradation of misfolded proteins. The protein is ATP-dependent Clp protease proteolytic subunit of Brachyspira hyodysenteriae (strain ATCC 49526 / WA1).